The chain runs to 301 residues: Glycine--tRNA ligase alpha subunit (301 aa).

The protein belongs to the class-II aminoacyl-tRNA synthetase family. As to quaternary structure, tetramer of two alpha and two beta subunits.

The protein localises to the cytoplasm. It catalyses the reaction tRNA(Gly) + glycine + ATP = glycyl-tRNA(Gly) + AMP + diphosphate. This is Glycine--tRNA ligase alpha subunit from Bordetella avium (strain 197N).